The following is a 213-amino-acid chain: tRNA (guanine-N(7)-)-methyltransferase (213 aa).

S-adenosyl-L-methionine-binding residues include Glu-44, Glu-69, Asp-96, and Asp-118. Residue Asp-118 is part of the active site. Substrate is bound by residues Lys-122, Asp-154, and 192 to 195; that span reads TEYE.

Belongs to the class I-like SAM-binding methyltransferase superfamily. TrmB family.

It catalyses the reaction guanosine(46) in tRNA + S-adenosyl-L-methionine = N(7)-methylguanosine(46) in tRNA + S-adenosyl-L-homocysteine. The protein operates within tRNA modification; N(7)-methylguanine-tRNA biosynthesis. In terms of biological role, catalyzes the formation of N(7)-methylguanine at position 46 (m7G46) in tRNA. The chain is tRNA (guanine-N(7)-)-methyltransferase from Limosilactobacillus reuteri (strain DSM 20016) (Lactobacillus reuteri).